Consider the following 393-residue polypeptide: Putative bacilysin exporter BacE (393 aa).

10 consecutive transmembrane segments (helical) span residues leucine 11–isoleucine 31, serine 43–valine 63, valine 69–leucine 89, glycine 92–phenylalanine 112, leucine 133–glycine 155, leucine 160–serine 177, methionine 215–valine 235, isoleucine 244–valine 264, alanine 287–isoleucine 307, and isoleucine 353–histidine 373.

Belongs to the major facilitator superfamily.

The protein localises to the cell membrane. Part of the bacilysin biosynthesis operon. May be involved in self-resistance to bacilysin by permitting efflux of this antibiotic. This is Putative bacilysin exporter BacE (bacE) from Bacillus amyloliquefaciens (Bacillus velezensis).